The following is a 260-amino-acid chain: MDKRVAEVAGAIVEAVRKILLDKRVTEAEYRAGVDYLTEVAQTRETALLLDVFLNSTIIEGKAQRSRTSAPAIQGPYFLEGAPVVEGVLKTYDTDDHKPLIIRGTVRSDTGELLAGAVIDVWHSTPDGLYSGIHDNIPVDYYRGKLVTDSQGNYRVRTTMPVPYQIPYEGPTGRLLGHLGSHTWRPAHVHFKVRKDGFEPLTTQYYFEGGKWVDDDCCHGVTPDLITPETIEDGVRVMTLDFVIEREQAEQRKSATETVA.

Tyr130, Tyr164, His188, and His190 together coordinate Fe cation.

It belongs to the intradiol ring-cleavage dioxygenase family. Fe(3+) is required as a cofactor.

It carries out the reaction 3-chlorocatechol + O2 = (2E,4Z)-2-chloromuconate + 2 H(+). The enzyme catalyses 3,5-dichlorocatechol + O2 = (2E,4E)-2,4-dichloromuconate + 2 H(+). Its pathway is aromatic compound metabolism; 3-chlorocatechol degradation. Functionally, preferentially converts 3-chlorocatechol and 3,5-dichlorocatechol as opposed to other chlorinated catechols. Retains diminished activity toward non-chlorinated substrates. The sequence is that of Chlorocatechol 1,2-dioxygenase (clcA) from Pseudomonas putida (Arthrobacter siderocapsulatus).